Consider the following 117-residue polypeptide: Nitrogen regulatory protein GlnK1 (117 aa).

Residues threonine 32, glycine 40–glutamine 42, and glycine 92–lysine 95 contribute to the ADP site. ATP-binding positions include threonine 32, glycine 40–glutamine 42, and glycine 92–lysine 95.

This sequence belongs to the P(II) protein family. In terms of assembly, homotrimer. Interacts and forms stable complexes with the glutamine synthetase GlnA1.

The protein resides in the cytoplasm. Its activity is regulated as follows. Inhibitory effects on GlnA1 are abolished in the presence of the effector 2-oxoglutarate. Its function is as follows. Involved in the regulation of nitrogen metabolism. Regulates the activity of its targets by protein-protein interaction in response to the nitrogen status of the cell. Allows finetuning control of the glutamine synthetase GlnA1 under changing nitrogen availabilities via direct protein interaction. This chain is Nitrogen regulatory protein GlnK1, found in Methanosarcina mazei (strain ATCC BAA-159 / DSM 3647 / Goe1 / Go1 / JCM 11833 / OCM 88) (Methanosarcina frisia).